The primary structure comprises 801 residues: MKISEQWLRQWVNPNNSSEQLADQLTMAGLEIDDRFAVARAFSGVVVGEVISVEQHPDADKLRVTQVNIGAVEPLQIVCGAPNVTVGMKVPVATVGAVLPSDDGTGFKIKNGNLRGVDSNGMLCGASEIDLTDNIDGLLELPTDAPIGTDIREYLGLDNQILDISITPNRGDCFSVRGIAREISVINDLPLQMPNIPDNNQVIHNEAMPAVTVSAVEACPRYFLQSISNIDRTIDTPKWMQDALVQSGLRSHNFLVDVTNYVLMELGQPLHAFDADTIVGDIVVRLAQPEETITLLNEQTISLTGDELVIADDKGALALAGIMGGQRSSVTDSTTNIVLESAFFNPLAIAARARRFGLHTDASQRFERGVDFELPALALARAVDLITSVTGSQAGQIVAMENSDHLPARAPITLPITKVRDVIGIEIEPVVMVRILTQLGFKVEQQADSLICTPPSYRFDMSIKEDLIEEIARIYGYDNIPSILPHLQVSMDYDDTADLTHEMKLALVDNGYMEAISFSFSDAKLEALLDDKALGEVLALANPISSDLAVMRRTLLSSLLPCVQYNLNRQQSRVRFFETGLSFVGHSVSDLVQTPSIAIVAVGDVWDEQAYQNRALDFYDLKHDIEQLLPAKIDNARIRYERSQLAFLHPGQSAKLYIDDQYVGWLGQLHPNTAKQLDLTTTWVAQLSLAPLLTLAREQHAITTPSKFPQVRRDIAILVDSDISLQTLESTIRKASGTLLTDLWLFDVYQGEKVPAGQRSLAFALIWQDKTQTLSDDAVKTATDKVVQALTVEHSAQLRDS.

The region spanning 39 to 152 is the tRNA-binding domain; sequence ARAFSGVVVG…TDAPIGTDIR (114 aa). In terms of domain architecture, B5 spans 407-482; sequence PARAPITLPI…RIYGYDNIPS (76 aa). Positions 460, 466, 469, and 470 each coordinate Mg(2+). One can recognise an FDX-ACB domain in the interval 706–799; the sequence is SKFPQVRRDI…LTVEHSAQLR (94 aa).

It belongs to the phenylalanyl-tRNA synthetase beta subunit family. Type 1 subfamily. Tetramer of two alpha and two beta subunits. Mg(2+) serves as cofactor.

The protein resides in the cytoplasm. It carries out the reaction tRNA(Phe) + L-phenylalanine + ATP = L-phenylalanyl-tRNA(Phe) + AMP + diphosphate + H(+). The chain is Phenylalanine--tRNA ligase beta subunit from Psychrobacter arcticus (strain DSM 17307 / VKM B-2377 / 273-4).